A 101-amino-acid chain; its full sequence is MAKQSMKARDVKRVKLAEKFYAKRAELKQIISDVNASDEDRWNAVLKLQTLPRDSSPSRQRNRCRQTGRPHGVLRKFGLSRIKVREAAMRGEIPGLKKASW.

Belongs to the universal ribosomal protein uS14 family. As to quaternary structure, part of the 30S ribosomal subunit. Contacts proteins S3 and S10.

In terms of biological role, binds 16S rRNA, required for the assembly of 30S particles and may also be responsible for determining the conformation of the 16S rRNA at the A site. The protein is Small ribosomal subunit protein uS14 of Pasteurella multocida (strain Pm70).